The chain runs to 784 residues: E3 UFM1-protein ligase 1 homolog (784 aa).

Over residues glutamine 398–glutamate 414 the composition is skewed to basic and acidic residues. The interval glutamine 398–proline 472 is disordered.

It belongs to the UFL1 family.

Functionally, E3 UFM1-protein ligase that mediates ufmylation of target proteins. This is E3 UFM1-protein ligase 1 homolog from Anopheles gambiae (African malaria mosquito).